The primary structure comprises 187 residues: MGYVELIAALRRDGEEQLEKIRSDAEREAERVKGDASARIERLRAEYAERLASLEAAQARAILADAESKASSIRLATESALAVRLFLLARSSLHHLRDEGYEQLFADLVRELPPGEWRRVVVNPADMALAARHFPNAEIVSHPAIVGGLEVSEEGGSISVVNTLEKRMERAWPELLPEILRDIYREL.

This sequence belongs to the V-ATPase E subunit family.

Its function is as follows. Produces ATP from ADP in the presence of a proton gradient across the membrane. This is V-type ATP synthase subunit E from Geotalea uraniireducens (strain Rf4) (Geobacter uraniireducens).